Reading from the N-terminus, the 518-residue chain is GMP synthase [glutamine-hydrolyzing] (518 aa).

The Glutamine amidotransferase type-1 domain occupies Arg-6–Asp-200. Cys-84 acts as the Nucleophile in catalysis. Active-site residues include His-175 and Glu-177. The 193-residue stretch at Trp-201–Arg-393 folds into the GMPS ATP-PPase domain. Ser-228–Ser-234 contacts ATP.

As to quaternary structure, homodimer.

It catalyses the reaction XMP + L-glutamine + ATP + H2O = GMP + L-glutamate + AMP + diphosphate + 2 H(+). The protein operates within purine metabolism; GMP biosynthesis; GMP from XMP (L-Gln route): step 1/1. In terms of biological role, catalyzes the synthesis of GMP from XMP. The chain is GMP synthase [glutamine-hydrolyzing] from Cereibacter sphaeroides (strain ATCC 17029 / ATH 2.4.9) (Rhodobacter sphaeroides).